A 396-amino-acid polypeptide reads, in one-letter code: Metallophosphoesterase 1 (396 aa).

A helical transmembrane segment spans residues 28–48 (TVVIISVLLFCEYFIYYLVLF). Positions 75, 117, 155, 249, 303, and 305 each coordinate a divalent metal cation. A helical membrane pass occupies residues 356–376 (TVLTMYGAAAGFLMILILVHF).

This sequence belongs to the metallophosphoesterase superfamily. MPPE1 family. In terms of assembly, interacts with GPI-anchor proteins (via the GPI portion). Interacts with TMED10. The cofactor is Mn(2+).

Its subcellular location is the endoplasmic reticulum-Golgi intermediate compartment membrane. Metallophosphoesterase that catalyzes the removal of a side-chain ethanolamine-phosphate (EtNP) from the second mannose of the GPI-anchor protein intermediate. Participates in the glycan remodeling steps of GPI-anchor maturation to allow an efficient transport of GPI-anchor proteins from the endoplasmic reticulum to the Golgi. The sequence is that of Metallophosphoesterase 1 from Mus musculus (Mouse).